Consider the following 272-residue polypeptide: Acetyl-coenzyme A carboxylase carboxyl transferase subunit alpha (272 aa).

In terms of domain architecture, CoA carboxyltransferase C-terminal spans Met-1–Glu-248.

It belongs to the AccA family. As to quaternary structure, acetyl-CoA carboxylase is a heterohexamer composed of biotin carboxyl carrier protein (AccB), biotin carboxylase (AccC) and two subunits each of ACCase subunit alpha (AccA) and ACCase subunit beta (AccD).

Its subcellular location is the cytoplasm. It catalyses the reaction N(6)-carboxybiotinyl-L-lysyl-[protein] + acetyl-CoA = N(6)-biotinyl-L-lysyl-[protein] + malonyl-CoA. It participates in lipid metabolism; malonyl-CoA biosynthesis; malonyl-CoA from acetyl-CoA: step 1/1. Functionally, component of the acetyl coenzyme A carboxylase (ACC) complex. First, biotin carboxylase catalyzes the carboxylation of biotin on its carrier protein (BCCP) and then the CO(2) group is transferred by the carboxyltransferase to acetyl-CoA to form malonyl-CoA. This Clostridium beijerinckii (strain ATCC 51743 / NCIMB 8052) (Clostridium acetobutylicum) protein is Acetyl-coenzyme A carboxylase carboxyl transferase subunit alpha.